Consider the following 483-residue polypeptide: MFS-type transporter hepF (483 aa).

Residues 1–31 (METPAGKADRPRDHDSEQSQDNVVSWEGEDD) form a disordered region. Positions 7-17 (KADRPRDHDSE) are enriched in basic and acidic residues. The next 11 helical transmembrane spans lie at 89-109 (TIVV…AAPI), 124-144 (ILYT…MLIV), 147-167 (FFAG…VADL), 179-199 (FVTL…GFLT), 206-226 (WVFW…ILFT), 276-296 (PISL…YVLV), 311-331 (IGIS…GLWI), 357-377 (PMMI…GWSV), 385-405 (MPIV…MPMV), 416-436 (AASA…VLPL), and 448-468 (GWGN…LIAI).

This sequence belongs to the major facilitator superfamily.

The protein localises to the cell membrane. In terms of biological role, MFS-type transporter; part of the gene cluster that mediates the biosynthesis of heptelidic acid (HA), a sesquiterpene lactone that acts as an inhibitor of glyceraldehyde-3-phosphatedehydrogenase (GAPDH) and a growth inhibitor of the salt-tolerant lactic acid bacteria in soy sauce brewing. Might be required for efficient secretion of heptelidic acid. This Aspergillus oryzae (strain ATCC 42149 / RIB 40) (Yellow koji mold) protein is MFS-type transporter hepF (hepF).